Reading from the N-terminus, the 174-residue chain is Crossover junction endodeoxyribonuclease RuvC (174 aa).

Active-site residues include aspartate 16, glutamate 76, and aspartate 148. Mg(2+) contacts are provided by aspartate 16, glutamate 76, and aspartate 148.

The protein belongs to the RuvC family. Homodimer which binds Holliday junction (HJ) DNA. The HJ becomes 2-fold symmetrical on binding to RuvC with unstacked arms; it has a different conformation from HJ DNA in complex with RuvA. In the full resolvosome a probable DNA-RuvA(4)-RuvB(12)-RuvC(2) complex forms which resolves the HJ. It depends on Mg(2+) as a cofactor.

Its subcellular location is the cytoplasm. The catalysed reaction is Endonucleolytic cleavage at a junction such as a reciprocal single-stranded crossover between two homologous DNA duplexes (Holliday junction).. The RuvA-RuvB-RuvC complex processes Holliday junction (HJ) DNA during genetic recombination and DNA repair. Endonuclease that resolves HJ intermediates. Cleaves cruciform DNA by making single-stranded nicks across the HJ at symmetrical positions within the homologous arms, yielding a 5'-phosphate and a 3'-hydroxyl group; requires a central core of homology in the junction. The consensus cleavage sequence is 5'-(A/T)TT(C/G)-3'. Cleavage occurs on the 3'-side of the TT dinucleotide at the point of strand exchange. HJ branch migration catalyzed by RuvA-RuvB allows RuvC to scan DNA until it finds its consensus sequence, where it cleaves and resolves the cruciform DNA. This Rhodopseudomonas palustris (strain ATCC BAA-98 / CGA009) protein is Crossover junction endodeoxyribonuclease RuvC.